Here is an 88-residue protein sequence, read N- to C-terminus: Apolipoprotein C-I (88 aa).

A signal peptide spans 1 to 26 (MRLFIALPVLIVVVAMALEGPAPAQA).

This sequence belongs to the apolipoprotein C1 family.

Its subcellular location is the secreted. Its function is as follows. Inhibitor of lipoprotein binding to the low density lipoprotein (LDL) receptor, LDL receptor-related protein, and very low density lipoprotein (VLDL) receptor. Associates with high density lipoproteins (HDL) and the triacylglycerol-rich lipoproteins in the plasma and makes up about 10% of the protein of the VLDL and 2% of that of HDL. Appears to interfere directly with fatty acid uptake and is also the major plasma inhibitor of cholesteryl ester transfer protein (CETP). Modulates the interaction of APOE with beta-migrating VLDL and inhibits binding of beta-VLDL to the LDL receptor-related protein. Binds free fatty acids and reduces their intracellular esterification. This chain is Apolipoprotein C-I (Apoc1), found in Grammomys surdaster (African woodland thicket rat).